A 102-amino-acid chain; its full sequence is Inner membrane protein YaiY (102 aa).

Residues 1–24 (MADFTLSKSLFSGKYRNASSTPGN) are Cytoplasmic-facing. A helical transmembrane segment spans residues 25–45 (IAYALFVLFCFWAGAQLLNLL). The Periplasmic segment spans residues 46–74 (VHAPGVYERLMQVQETGRPRVEIGLGVGT). A helical transmembrane segment spans residues 75-95 (IFGLIPFLVGCLIFAVVALWL). At 96–102 (HWRHRRQ) the chain is on the cytoplasmic side.

The protein localises to the cell inner membrane. This Escherichia coli O157:H7 protein is Inner membrane protein YaiY (yaiY).